We begin with the raw amino-acid sequence, 184 residues long: Cell wall protein phiA (184 aa).

The first 21 residues, 1–21 (MQLKNLIFAAATAAALPATDA), serve as a signal peptide directing secretion. N-linked (GlcNAc...) asparagine glycosylation is present at Asn-58.

The protein belongs to the phiA family.

The protein localises to the secreted. It is found in the cell wall. Its function is as follows. Cell wall protein involved in development of asexual structures such as phialide and conidium development, and thus required for spore formation. Plays a role as a general stress protectant produced by the fungus in competition with antagonistic bacteria. This Aspergillus niger (strain ATCC MYA-4892 / CBS 513.88 / FGSC A1513) protein is Cell wall protein phiA.